The sequence spans 617 residues: Protein DWARF AND LOW-TILLERING (617 aa).

Disordered stretches follow at residues 29 to 92 (KRGS…HDED) and 159 to 206 (PSLA…GVPA). Residues 171–187 (KSPSDSSSSSGTDGGSS) are compositionally biased toward low complexity. One can recognise a GRAS domain in the interval 208-594 (GQAEREALEL…QPLYTVTAWT (387 aa)). The interval 215–295 (LELVRALTAC…LTDDAFGGGD (81 aa)) is leucine repeat I (LRI). The VHIID stretch occupies residues 301 to 366 (LRILNAITPI…VPPAHVRITG (66 aa)). Residues 332–336 (VHVID) carry the VHIID motif. The segment at 376–408 (ETGARLARVAAALGLAFEFHAVVDRLEDVRLWM) is leucine repeat II (LRII). The PFYRE stretch occupies residues 417–508 (VAVNCVLAMH…EEMFAREIRN (92 aa)). Residues 511-594 (AFEGPERFER…QPLYTVTAWT (84 aa)) form an SAW region. Positions 596 to 617 (AGDGAGGSTVSASTTASHSQQS) are disordered. The span at 603–617 (STVSASTTASHSQQS) shows a compositional bias: low complexity.

Belongs to the GRAS family. In terms of assembly, interacts with GSK2. Interacts with SMOS1 (via C-terminus). In terms of processing, phosphorylated on serine and threonine residues by GSK2. Dephosphorylated during response to brassinosteroid. In terms of tissue distribution, expressed in the shoot apical meristem (SAM) and elongating cells of young seedlings. Expressed in leaf joints, culms, internodes, stems, young panicles, primary roots and lateral roots.

Its subcellular location is the nucleus. In terms of biological role, probable transcription factor that acts as a positive regulator of brassinosteroid (BR) signaling. Functions downstream of BRI1 and GSK2 to modulate BR responses. Acts as a direct target of GSK2 kinase to mediate BR responses. Involved in feedback inhibition of BR biosynthetic genes. Repressed by BZR1. Cooperatively functions in a transactivating complex with SMOS1 to enhance the transcription of the SMOS1 target PHI-1, and regulate plant organ size. Interaction between SMOS1 and DLT is a crosstalk point for auxin and brassinosteroid signaling. The sequence is that of Protein DWARF AND LOW-TILLERING from Oryza sativa subsp. japonica (Rice).